A 455-amino-acid polypeptide reads, in one-letter code: Phosphoglucosamine mutase (455 aa).

The Phosphoserine intermediate role is filled by serine 103. Mg(2+) contacts are provided by serine 103, aspartate 243, aspartate 245, and aspartate 247. Serine 103 carries the phosphoserine modification.

Belongs to the phosphohexose mutase family. It depends on Mg(2+) as a cofactor. Activated by phosphorylation.

It carries out the reaction alpha-D-glucosamine 1-phosphate = D-glucosamine 6-phosphate. Its function is as follows. Catalyzes the conversion of glucosamine-6-phosphate to glucosamine-1-phosphate. The protein is Phosphoglucosamine mutase of Halorhodospira halophila (strain DSM 244 / SL1) (Ectothiorhodospira halophila (strain DSM 244 / SL1)).